Reading from the N-terminus, the 502-residue chain is Glycerol kinase (502 aa).

Thr-14 contacts ADP. Positions 14, 15, and 16 each coordinate ATP. Position 14 (Thr-14) interacts with sn-glycerol 3-phosphate. Arg-18 serves as a coordination point for ADP. Residues Arg-84, Glu-85, Tyr-136, and Asp-246 each contribute to the sn-glycerol 3-phosphate site. Residues Arg-84, Glu-85, Tyr-136, Asp-246, and Gln-247 each contribute to the glycerol site. ADP-binding residues include Thr-268 and Gly-311. Thr-268, Gly-311, Gln-315, and Gly-412 together coordinate ATP. Gly-412 and Asn-416 together coordinate ADP.

Belongs to the FGGY kinase family. In terms of assembly, homotetramer and homodimer (in equilibrium). Heterodimer with EIIA-Glc. Binds 1 zinc ion per glycerol kinase EIIA-Glc dimer. The zinc ion is important for dimerization.

The enzyme catalyses glycerol + ATP = sn-glycerol 3-phosphate + ADP + H(+). It functions in the pathway polyol metabolism; glycerol degradation via glycerol kinase pathway; sn-glycerol 3-phosphate from glycerol: step 1/1. With respect to regulation, activity of this regulatory enzyme is affected by several metabolites. Allosterically and non-competitively inhibited by fructose 1,6-bisphosphate (FBP) and unphosphorylated phosphocarrier protein EIIA-Glc (III-Glc), an integral component of the bacterial phosphotransferase (PTS) system. Functionally, key enzyme in the regulation of glycerol uptake and metabolism. Catalyzes the phosphorylation of glycerol to yield sn-glycerol 3-phosphate. In Citrobacter koseri (strain ATCC BAA-895 / CDC 4225-83 / SGSC4696), this protein is Glycerol kinase.